The chain runs to 426 residues: Histidine--tRNA ligase (426 aa).

This sequence belongs to the class-II aminoacyl-tRNA synthetase family. In terms of assembly, homodimer.

It localises to the cytoplasm. The catalysed reaction is tRNA(His) + L-histidine + ATP = L-histidyl-tRNA(His) + AMP + diphosphate + H(+). The protein is Histidine--tRNA ligase of Streptococcus pyogenes serotype M18 (strain MGAS8232).